Reading from the N-terminus, the 108-residue chain is Nucleoid-associated protein Bphy_0952 (108 aa).

A disordered region spans residues 87-108 (AQEKMGGMTSGLPLPPGFKLPF). A compositionally biased stretch (pro residues) spans 99–108 (PLPPGFKLPF).

This sequence belongs to the YbaB/EbfC family. As to quaternary structure, homodimer.

Its subcellular location is the cytoplasm. It is found in the nucleoid. In terms of biological role, binds to DNA and alters its conformation. May be involved in regulation of gene expression, nucleoid organization and DNA protection. The polypeptide is Nucleoid-associated protein Bphy_0952 (Paraburkholderia phymatum (strain DSM 17167 / CIP 108236 / LMG 21445 / STM815) (Burkholderia phymatum)).